A 448-amino-acid polypeptide reads, in one-letter code: Hyaluronidase conohyal-Cn1 (448 aa).

Residues 1–18 form the signal peptide; sequence MRAVVVVTGLVVVVVATA. Positions 19-33 are excised as a propeptide; sequence LSLPNHDVKSATSSR. Residues 26 to 55 are disordered; the sequence is VKSATSSRSSSDYQGSSGDDCDEGLPPPDQ. The span at 31 to 43 shows a compositional bias: low complexity; that stretch reads SSRSSSDYQGSSG. Cysteine 67 and cysteine 344 are joined by a disulfide. Asparagine 141 carries N-linked (GlcNAc...) asparagine glycosylation. Glutamate 151 functions as the Proton donor in the catalytic mechanism. N-linked (GlcNAc...) asparagine glycosylation is found at asparagine 169 and asparagine 361. 3 cysteine pairs are disulfide-bonded: cysteine 369/cysteine 380, cysteine 374/cysteine 413, and cysteine 415/cysteine 424. Residues 413-424 form the EGF-like domain; sequence CRCYSAWEGACC.

Belongs to the glycosyl hydrolase 56 family. Expressed by the venom duct.

It is found in the secreted. It catalyses the reaction Random hydrolysis of (1-&gt;4)-linkages between N-acetyl-beta-D-glucosamine and D-glucuronate residues in hyaluronate.. Functionally, hyaluronidase catalyzes the hydrolysis of hyaluronic acid (HA), an anionic, nonsulfated glycosaminoglycan distributed widely throughout connective, epithelial, and neural tissues. In venom, they are known to enhance diffusion of the venom by degrading the extracellular matrix. The chain is Hyaluronidase conohyal-Cn1 from Conus consors (Singed cone).